An 80-amino-acid chain; its full sequence is MPKKNEAPASFETALSELEQIVTRLESGDLPLEEALNEFERGVQLARQGQAKLQQAEQRVQILLSDNEDASPEPFTPDNE.

The protein belongs to the XseB family. Heterooligomer composed of large and small subunits.

The protein resides in the cytoplasm. It catalyses the reaction Exonucleolytic cleavage in either 5'- to 3'- or 3'- to 5'-direction to yield nucleoside 5'-phosphates.. Functionally, bidirectionally degrades single-stranded DNA into large acid-insoluble oligonucleotides, which are then degraded further into small acid-soluble oligonucleotides. This is Exodeoxyribonuclease 7 small subunit from Citrobacter koseri (strain ATCC BAA-895 / CDC 4225-83 / SGSC4696).